A 205-amino-acid polypeptide reads, in one-letter code: GTP cyclohydrolase-2 (205 aa).

49 to 53 (RIHSE) contacts GTP. 3 residues coordinate Zn(2+): cysteine 54, cysteine 65, and cysteine 67. Residues glutamine 70, 92 to 94 (EGR), and threonine 114 each bind GTP. Aspartate 126 (proton acceptor) is an active-site residue. The Nucleophile role is filled by arginine 128. GTP is bound by residues threonine 149 and lysine 154.

The protein belongs to the GTP cyclohydrolase II family. It depends on Zn(2+) as a cofactor.

The catalysed reaction is GTP + 4 H2O = 2,5-diamino-6-hydroxy-4-(5-phosphoribosylamino)-pyrimidine + formate + 2 phosphate + 3 H(+). Its pathway is cofactor biosynthesis; riboflavin biosynthesis; 5-amino-6-(D-ribitylamino)uracil from GTP: step 1/4. Functionally, catalyzes the conversion of GTP to 2,5-diamino-6-ribosylamino-4(3H)-pyrimidinone 5'-phosphate (DARP), formate and pyrophosphate. The chain is GTP cyclohydrolase-2 from Shewanella amazonensis (strain ATCC BAA-1098 / SB2B).